A 533-amino-acid chain; its full sequence is Adenine deaminase (533 aa).

Belongs to the metallo-dependent hydrolases superfamily. Adenine deaminase family. Requires Mn(2+) as cofactor.

The enzyme catalyses adenine + H2O + H(+) = hypoxanthine + NH4(+). The chain is Adenine deaminase from Sulfurovum sp. (strain NBC37-1).